The primary structure comprises 1203 residues: DNA-directed RNA polymerase subunit beta (1203 aa).

Basic and acidic residues predominate over residues A1174–A1195. A disordered region spans residues A1174–E1203.

Belongs to the RNA polymerase beta chain family. The RNAP catalytic core consists of 2 alpha, 1 beta, 1 beta' and 1 omega subunit. When a sigma factor is associated with the core the holoenzyme is formed, which can initiate transcription.

It catalyses the reaction RNA(n) + a ribonucleoside 5'-triphosphate = RNA(n+1) + diphosphate. Functionally, DNA-dependent RNA polymerase catalyzes the transcription of DNA into RNA using the four ribonucleoside triphosphates as substrates. The sequence is that of DNA-directed RNA polymerase subunit beta from Streptococcus pneumoniae (strain JJA).